Here is a 491-residue protein sequence, read N- to C-terminus: Ketol-acid reductoisomerase (NADP(+)) (491 aa).

The KARI N-terminal Rossmann domain occupies 15–208 (AQLGKCRFMG…GGHRAGVLES (194 aa)). Residues 45–48 (CGAQ), arginine 68, arginine 76, serine 78, and 108–110 (DKQ) contribute to the NADP(+) site. Histidine 132 is a catalytic residue. Glycine 158 is a binding site for NADP(+). KARI C-terminal knotted domains are found at residues 209–344 (SFVA…TAPQ) and 345–484 (YEGK…MTDM). Residues aspartate 217, glutamate 221, glutamate 389, and glutamate 393 each coordinate Mg(2+). A substrate-binding site is contributed by serine 414.

It belongs to the ketol-acid reductoisomerase family. It depends on Mg(2+) as a cofactor.

It carries out the reaction (2R)-2,3-dihydroxy-3-methylbutanoate + NADP(+) = (2S)-2-acetolactate + NADPH + H(+). It catalyses the reaction (2R,3R)-2,3-dihydroxy-3-methylpentanoate + NADP(+) = (S)-2-ethyl-2-hydroxy-3-oxobutanoate + NADPH + H(+). It functions in the pathway amino-acid biosynthesis; L-isoleucine biosynthesis; L-isoleucine from 2-oxobutanoate: step 2/4. It participates in amino-acid biosynthesis; L-valine biosynthesis; L-valine from pyruvate: step 2/4. In terms of biological role, involved in the biosynthesis of branched-chain amino acids (BCAA). Catalyzes an alkyl-migration followed by a ketol-acid reduction of (S)-2-acetolactate (S2AL) to yield (R)-2,3-dihydroxy-isovalerate. In the isomerase reaction, S2AL is rearranged via a Mg-dependent methyl migration to produce 3-hydroxy-3-methyl-2-ketobutyrate (HMKB). In the reductase reaction, this 2-ketoacid undergoes a metal-dependent reduction by NADPH to yield (R)-2,3-dihydroxy-isovalerate. In Citrobacter koseri (strain ATCC BAA-895 / CDC 4225-83 / SGSC4696), this protein is Ketol-acid reductoisomerase (NADP(+)).